A 350-amino-acid polypeptide reads, in one-letter code: Hydroxymethylglutaryl-CoA synthase (350 aa).

The (3S)-3-hydroxy-3-methylglutaryl-CoA site is built by aspartate 33 and valine 34. The Proton donor/acceptor role is filled by glutamate 85. Cysteine 117 and threonine 158 together coordinate (3S)-3-hydroxy-3-methylglutaryl-CoA. Residue cysteine 117 is the Acyl-thioester intermediate of the active site. Residue arginine 204 coordinates CoA. Positions 206 and 239 each coordinate (3S)-3-hydroxy-3-methylglutaryl-CoA. The active-site Proton donor/acceptor is histidine 239. Lysine 244 contributes to the CoA binding site. (3S)-3-hydroxy-3-methylglutaryl-CoA is bound by residues lysine 248, asparagine 271, and serine 301.

The protein belongs to the thiolase-like superfamily. Archaeal HMG-CoA synthase family. As to quaternary structure, interacts with acetoacetyl-CoA thiolase that catalyzes the precedent step in the pathway and with a DUF35 protein. The acetoacetyl-CoA thiolase/HMG-CoA synthase complex channels the intermediate via a fused CoA-binding site, which allows for efficient coupling of the endergonic thiolase reaction with the exergonic HMGCS reaction.

It carries out the reaction acetoacetyl-CoA + acetyl-CoA + H2O = (3S)-3-hydroxy-3-methylglutaryl-CoA + CoA + H(+). It participates in metabolic intermediate biosynthesis; (R)-mevalonate biosynthesis; (R)-mevalonate from acetyl-CoA: step 2/3. Functionally, catalyzes the condensation of acetyl-CoA with acetoacetyl-CoA to form 3-hydroxy-3-methylglutaryl-CoA (HMG-CoA). Functions in the mevalonate (MVA) pathway leading to isopentenyl diphosphate (IPP), a key precursor for the biosynthesis of isoprenoid compounds that are building blocks of archaeal membrane lipids. In Methanopyrus kandleri (strain AV19 / DSM 6324 / JCM 9639 / NBRC 100938), this protein is Hydroxymethylglutaryl-CoA synthase.